The chain runs to 489 residues: Glycogen synthase (489 aa).

K15 lines the ADP-alpha-D-glucose pocket.

The protein belongs to the glycosyltransferase 1 family. Bacterial/plant glycogen synthase subfamily.

The enzyme catalyses [(1-&gt;4)-alpha-D-glucosyl](n) + ADP-alpha-D-glucose = [(1-&gt;4)-alpha-D-glucosyl](n+1) + ADP + H(+). It participates in glycan biosynthesis; glycogen biosynthesis. Synthesizes alpha-1,4-glucan chains using ADP-glucose. The polypeptide is Glycogen synthase (Francisella tularensis subsp. holarctica (strain FTNF002-00 / FTA)).